Consider the following 696-residue polypeptide: DNA topoisomerase 6 subunit B (696 aa).

The tract at residues 1–36 is disordered; the sequence is MDDDAGDGAASGGTKRKVTAASSSAAAKGKAAGKGK. Low complexity predominate over residues 20–36; it reads AASSSAAAKGKAAGKGK. Residues Asn88, Asp187, 208–209, 217–224, and Lys543 each bind ATP; these read TK and GKFGLGAK.

Belongs to the TOP6B family. Homodimer. Heterotetramer of two TOP6A and two TOP6B subunits. Interacts with SPO11-2 and TOP6A3. In terms of tissue distribution, highly expressed in flowers before pollination. Expressed in roots and shoots.

The protein resides in the nucleus. It catalyses the reaction ATP-dependent breakage, passage and rejoining of double-stranded DNA.. Component of the DNA topoisomerase VI involved in chromatin organization and progression of endoreduplication cycles. Relaxes both positive and negative superturns and exhibits a strong decatenase activity. The B subunit binds ATP. May be involved in cell proliferation and stress tolerance. In Oryza sativa subsp. indica (Rice), this protein is DNA topoisomerase 6 subunit B.